Consider the following 423-residue polypeptide: Diels-Alderase pyiF (423 aa).

The first 17 residues, 1–17 (MLPSFIFVYSLLATATA), serve as a signal peptide directing secretion. N-linked (GlcNAc...) asparagine glycans are attached at residues asparagine 60, asparagine 92, and asparagine 219.

It belongs to the Diels-Alderase family.

The protein operates within mycotoxin biosynthesis. In terms of biological role, diels-Alderase; part of the gene cluster that mediates the biosynthesis of the mycotoxin pyrichalasin H, a tyrosine-derived cytochalasan that inhibits the growth of rice seedlings, but also inhibits lymphocyte capping and actin polymerization and alters cell morphology. Pyrichalasin H is indicated as the responsible agent for the genus-specific pathogenicity of M.grisea toward crabgrass. The first step in the pathway is catalyzed by the O-methyltransferase pyiA which methylates free tyrosine to generate the precursor O-methyltyrosine. The hybrid PKS-NRPS pyiS, assisted by the enoyl reductase pyiC, are responsible for fusion of the O-methyltyrosine precursor and the polyketide backbone. The polyketide synthase module (PKS) of pyiS is responsible for the synthesis of the polyketide backbone and the downstream nonribosomal peptide synthetase (NRPS) amidates the carboxyl end of the polyketide with the O-methyltyrosine precursor. As the NRPS A-domain demonstrates substrate tolerance, pyiS can also use phenylalanine, tyrosine and even para-chlorophenylalanine as amino acid precursor, which leads to the production of novel cytochalasans, including halogenated cytochalasans. Because pyiS lacks a designated enoylreductase (ER) domain, the required activity is provided the enoyl reductase pyiC. Reduction by the hydrolyase pyiE leads to 1,5-dihydropyrrolone, which is substrate for dehydration and intra-molecular Diels-Alder cyclization by the Diels-Alderase pyiF to yield the required isoindolone-fused macrocycle. The tailoring cytochrome P450 monooxygenases piyD and piyG catalyze the hydroxylation at C-18 and C-7, respectivily, whereas the short-chain dehydrogenase/reductase pyiH reduces the carbonyl at C-21 in preparation for the transfer of an acetyl group by the acetyltransferase pyiB. These 3 reactions whose order is not clear yet, lead to the production of O-methylpyrichalasin J, a deacetylated pyrichalasin H. Finally, pyiB to converts O-methylpyrichalasin J into the final product pyrichalasin H via acetylation of C-21. This Pyricularia grisea (Crabgrass-specific blast fungus) protein is Diels-Alderase pyiF.